An 81-amino-acid polypeptide reads, in one-letter code: Short neurotoxin 2 (81 aa).

The signal sequence occupies residues Met1–Thr21. Intrachain disulfides connect Cys24-Cys43, Cys38-Cys60, Cys62-Cys73, and Cys74-Cys79.

Belongs to the three-finger toxin family. Short-chain subfamily. Type I alpha-neurotoxin sub-subfamily. In terms of tissue distribution, expressed by the venom gland.

The protein localises to the secreted. Its function is as follows. Binds to muscle nicotinic acetylcholine receptor (nAChR) and inhibit acetylcholine from binding to the receptor, thereby impairing neuromuscular transmission. This chain is Short neurotoxin 2, found in Drysdalia coronoides (White-lipped snake).